A 444-amino-acid polypeptide reads, in one-letter code: MSSVLVRFAPSPTGRLHLGNARVAVLNWLFAHAHGGAMVLRLDDTDIARGTAEFAQAIRDDLLWLGLTWTREESQLARAARHAEAVDQLKAAGRLYACYETPEELEYRRRRQRAQGLPPIYDRAGLALSAAERAALEAEGRKPHWRFRLDHEETSWLDLARGPCHAHGGHLSDPVLVREDGSLLYTLPSVVDDIDFAISHVIRGEDHVVNTAVQIQICRALGAEPPHYAHLPLVLTAEGGGLSKRDNALSLGDLRAQGIEPAAINALLAALGTAEAPDPLKSLDELAQGFRLDAFGRAAPRLDPADLVRLSARIYHALSPSEARARGIAVSDALWLALRANLTTLSDLDELLPVVEGEITPLIAEEDRAMIDEAARLLPETPWDATTWATWTAAVKTATGRKGKGLFMPLRRALTGVDHGPELAALLPLIGRDKALARLRGEKA.

The 'HIGH' region signature appears at 10 to 20 (PSPTGRLHLGN). A 'KMSKS' region motif is present at residues 241–245 (GLSKR). Position 244 (Lys244) interacts with ATP.

This sequence belongs to the class-I aminoacyl-tRNA synthetase family. Glutamate--tRNA ligase type 1 subfamily. In terms of assembly, monomer.

The protein localises to the cytoplasm. It catalyses the reaction tRNA(Glu) + L-glutamate + ATP = L-glutamyl-tRNA(Glu) + AMP + diphosphate. Its function is as follows. Catalyzes the attachment of glutamate to tRNA(Glu) in a two-step reaction: glutamate is first activated by ATP to form Glu-AMP and then transferred to the acceptor end of tRNA(Glu). The sequence is that of Glutamate--tRNA ligase 1 from Rhodospirillum rubrum (strain ATCC 11170 / ATH 1.1.1 / DSM 467 / LMG 4362 / NCIMB 8255 / S1).